The primary structure comprises 936 residues: Probable outer membrane protein pmp7 (936 aa).

The first 23 residues, 1 to 23 (MKSSVSWLFFSSIPLFSSLSIVA), serve as a signal peptide directing secretion. Residues 636 to 936 (GEPFERELWL…NTNLGSKFCF (301 aa)) form the Autotransporter domain.

The protein belongs to the PMP outer membrane protein family.

It is found in the secreted. It localises to the cell wall. Its subcellular location is the cell outer membrane. The protein is Probable outer membrane protein pmp7 (pmp7) of Chlamydia pneumoniae (Chlamydophila pneumoniae).